Reading from the N-terminus, the 72-residue chain is NAD(P)H-quinone oxidoreductase subunit O (72 aa).

The protein belongs to the complex I NdhO subunit family. As to quaternary structure, NDH-1 can be composed of about 15 different subunits; different subcomplexes with different compositions have been identified which probably have different functions.

It is found in the cellular thylakoid membrane. The catalysed reaction is a plastoquinone + NADH + (n+1) H(+)(in) = a plastoquinol + NAD(+) + n H(+)(out). It catalyses the reaction a plastoquinone + NADPH + (n+1) H(+)(in) = a plastoquinol + NADP(+) + n H(+)(out). Its function is as follows. NDH-1 shuttles electrons from an unknown electron donor, via FMN and iron-sulfur (Fe-S) centers, to quinones in the respiratory and/or the photosynthetic chain. The immediate electron acceptor for the enzyme in this species is believed to be plastoquinone. Couples the redox reaction to proton translocation, and thus conserves the redox energy in a proton gradient. Cyanobacterial NDH-1 also plays a role in inorganic carbon-concentration. The chain is NAD(P)H-quinone oxidoreductase subunit O from Trichodesmium erythraeum (strain IMS101).